Consider the following 1014-residue polypeptide: MLILSFLCPAFLNAQIVTDERMFSFEEPQLPACITGVQSQLGISGAHYKDGKHSLEWTFEPNGRLELRKDLKFEKKDPTGKDLYLSAFIVWIYNEQPQDAAIEFEFLKDGRKCASFPFGINFKGWRAAWVCYERDMQGTPEEGMNELRIVAPDAKGRLFIDHLITATKVDARQQTADLQVPFVNAGTTNHWLVLYKHSLLKPDIELTPVSDKQRQEMKLLEKRFRDMIYTKGKVTEKEAETIRKKYDLYQITYKDGQVSGVPVFMVRASEAYERMIPDWDKDMLTKMGIEMRAYFDLMKRIAVAYNNSEAGSPIRKEMRRKFLAMYDHITDQGVAYGSCWGNIHHYGYSVRGLYPAYFLMKDVLREEGKLLEAERTLRWYAITNEVYPKPEGNGIDMDSFNTQTTGRIASILMMEDTPEKLQYLKSFSRWIDYGCRPAPGLAGSFKVDGGAFHHRNNYPAYAVGGLDGATNMIYLFSRTSLAVSELAHRTVKDVLLAMRFYCNKLNFPLSMSGRHPDGKGKLVPMHYAIMAIAGTPDGKGDFDKEMASAYLRLVSSDSSSAEQAPEYMPKVSNAQERKIAKRLVENGFRAEPDPQGNLSLGYGCVSVQRRENWSAVARGHSRYLWAAEHYLGHNLYGRYLAHGSLQILTAPPGQTVTPTTSGWQQEGFDWNRIPGVTSIHLPLDLLKANVLNVDTFSGMEEMLYSDEAFAGGLSQGKMNGNFGMKLHEHDKYNGTHRARKSFHFIDGMIVCLGSDIENTNMDYPTETTIFQLAVTDKAAHDYWKNNAGEGKVWMDHLGTGYYVPVAARFEKNFPQYSRMQDTGKETKGDWVSLIIDHGKAPKAGSYEYAILPGTDRKTMTAFAKKPAYSVLQQDRNAHILESPSDRITSYVLFETPQSLLPGGLLQRTDTSCLVMVRKESADKVLLTVAQPDLALYRGPSDEAFDKDGKRMERSIYSRPWIDNESGEIPVTVTLKGRWKVVETPYCKVVSEDKKQTVLRFLCKDGASYEVELEK.

The first 14 residues, 1 to 14 (MLILSFLCPAFLNA), serve as a signal peptide directing secretion. Ca(2+) contacts are provided by Ser24, Glu26, Asp50, His53, and Asp161. Residues His345 and His454 each act as proton acceptor in the active site. Residue Tyr461 is the Proton donor of the active site.

The protein belongs to the polysaccharide lyase 8 family. In terms of assembly, monomer. It depends on Ca(2+) as a cofactor. The cofactor is Mg(2+).

It is found in the periplasm. The enzyme catalyses Exolytic removal of Delta(4)-unsaturated disaccharide residues from the non-reducing ends of both polymeric chondroitin/dermatan sulfates and their oligosaccharide fragments.. Specific activity for chondroitin sulfate substrates increases moderately (2-fold) while an increase of 25-fold is observed for dermatan sulfate as substrate upon addition of Ca(2+) or Mg(2+) ions. Increasing the concentration of Na(+), K(+) or Cs(+) chloride from 0 to 0.1 M, increases the activity against all substrates. Further increases in salt concentration reduces the activity dramatically, with 50% inhibition occurring at 0.15 M and nearly complete inhibition at 0.4 M salt. The addition of 10 mM Ca(2+) or Mg(2+) ions increases the activity against chondroitin 4- and 6-sulfates by 2-3-fold, while the activity against dermatan sulfate increases much more significantly by 50-fold. Addition of Mn(2+) and Zn(2+) reduces activity against chondroitin sulfate substrates, but increases the activity against dermatan sulfate. Increasing the concentration of CaCl(2) with both chondroitin 4- and 6-sulfates from 0 to 0.04 M increases the activity. A further increase reduces activity, with 50% inhibition at 0.065-0.085 M and a complete inhibition of the reaction at 0.2 M. In case of dermatan sulfate, the addition of low concentration of CaCl(2) dramatically increases the activity from the basal level. The maximal activity is reached at 0.01 M CaCl(2). Its function is as follows. Broad-specificity glycosaminoglycan lyase, which acts in an exolytic fashion degrading chondroitin sulfates and dermatan sulfate to yield only disaccharide products. Has a preference for chondroitin 4-sulfate over chondroitin 6-sulfate. Has extremely low activity against hyaluronic acid. Is not active against acharan sulfate, heparin or heparan sulfate. The protein is Chondroitin sulfate ABC exolyase (chonabc) of Bacteroides thetaiotaomicron.